Here is a 168-residue protein sequence, read N- to C-terminus: Putative flavin-containing monooxygenase FMO GS-OX-like 11 (168 aa).

Position 17 to 22 (G17 to G22) interacts with FAD.

It belongs to the FMO family. FAD serves as cofactor.

In terms of biological role, catalyzes the conversion of methylthioalkyl glucosinolates of any chain length into methylsulfinylalkyl glucosinolates. The protein is Putative flavin-containing monooxygenase FMO GS-OX-like 11 of Arabidopsis thaliana (Mouse-ear cress).